The sequence spans 150 residues: D-aminoacyl-tRNA deacylase (150 aa).

A Gly-cisPro motif, important for rejection of L-amino acids motif is present at residues 138–139 (GP).

This sequence belongs to the DTD family. Homodimer.

The protein resides in the cytoplasm. The catalysed reaction is glycyl-tRNA(Ala) + H2O = tRNA(Ala) + glycine + H(+). It catalyses the reaction a D-aminoacyl-tRNA + H2O = a tRNA + a D-alpha-amino acid + H(+). In terms of biological role, an aminoacyl-tRNA editing enzyme that deacylates mischarged D-aminoacyl-tRNAs. Also deacylates mischarged glycyl-tRNA(Ala), protecting cells against glycine mischarging by AlaRS. Acts via tRNA-based rather than protein-based catalysis; rejects L-amino acids rather than detecting D-amino acids in the active site. By recycling D-aminoacyl-tRNA to D-amino acids and free tRNA molecules, this enzyme counteracts the toxicity associated with the formation of D-aminoacyl-tRNA entities in vivo and helps enforce protein L-homochirality. The polypeptide is D-aminoacyl-tRNA deacylase (Christiangramia forsetii (strain DSM 17595 / CGMCC 1.15422 / KT0803) (Gramella forsetii)).